Reading from the N-terminus, the 327-residue chain is Asnovolin J 5',6'-dehydrogenase nvfM (327 aa).

Residues 9–29 (VAIVGASGVTGGSIVNGLLAL) form a helical membrane-spanning segment. NADP(+)-binding positions include 13–19 (GASGVTG) and K47. K130 (proton acceptor) is an active-site residue.

This sequence belongs to the NmrA-type oxidoreductase family.

It is found in the membrane. The enzyme catalyses asnovolin K + AH2 = asnovolin A + A. It catalyses the reaction chermesin D methyl ester + AH2 = asnovolin J + A. Its pathway is secondary metabolite biosynthesis; terpenoid biosynthesis. Asnovolin J 5',6'-dehydrogenase; part of the gene cluster that mediates the biosynthesis of novofumigatonin, a heavily oxygenated meroterpenoid containing a unique orthoester moiety. The first step of the pathway is the synthesis of 3,5-dimethylorsellinic acid (DMOA) by the polyketide synthase nvfA via condensation of one acetyl-CoA starter unit with 3 malonyl-CoA units and 2 methylations. DMOA is then converted to farnesyl-DMOA by the farnesyltransferase nvfB. Epoxydation by FAD-dependent monooxygenase nvfK, followed by a protonation-initiated cyclization catalyzed by the terpene cyclase nvfL leads to the production of asnavolin H. The short chain dehydrogenase nvfC then as a 3-OH dehydrogenase of asnovolin H to yield chemesin D. There are two branches to synthesize asnovolin A from chemesin D. In one branch, chemesin D undergoes Baeyer-Villiger oxidation by nvfH, methylation by nvfJ, and enoyl reduction by the nvfM D enoylreductase that reduces the double bond between C-5'and C-6', to form respectively asnovolin I, asnovolin K, and asnovolin A. In the other branch, the methylation precedes the Baeyer-Villiger oxidation and the enoyl reduction to yield asnovolin A via the asnovolin J intermediate. Asnovolin A is further converted to fumigatonoid A by the Fe(II)/2-oxoglutarate-dependent dioxygenase nvfI that catalyzes an endoperoxidation reaction. The alpha/beta hydrolase nvfD then acts as an epimerase that converts fumigatonoid A to its C-5' epimer, which then undergoes spontaneous or nvfD-catalyzed lactonization. The following step utilizes the ketoreductase nvfG to produce fumigatonoid B. The dioxygenase nvfE further converts fumigatonoid B into fumigatonoid C. Finally the Fe(II)/2-oxoglutarate-dependent dioxygenase nvfF catalyzes two rounds of oxidation to transform fumigatonoid C into the end product, novofumigatonin A. This chain is Asnovolin J 5',6'-dehydrogenase nvfM, found in Aspergillus novofumigatus (strain IBT 16806).